Consider the following 518-residue polypeptide: Myosin-binding protein 7 (518 aa).

In terms of domain architecture, GTD-binding spans 69–167 (NELELLRETV…ALTFEAQAYK (99 aa)). The interval 276–350 (VVGQSPRHQR…DSSEIGDNDM (75 aa)) is disordered. Low complexity predominate over residues 291–301 (STGSASSLLGT). The span at 310 to 320 (SNDSPRSNNGS) shows a compositional bias: polar residues. Residue Ser-385 is modified to Phosphoserine. Positions 399–431 (EISKLYMRLQALEADRESMRQAIMSMRTEKAQM) form a coiled coil. A helical transmembrane segment spans residues 458–477 (IIGAFNFISVFKWITSFVFW).

In terms of assembly, interacts with myosin XI-I.

The protein localises to the endomembrane system. In terms of biological role, membrane-anchored myosin receptors that define a distinct, plant-specific transport vesicle compartment. The protein is Myosin-binding protein 7 of Arabidopsis thaliana (Mouse-ear cress).